The sequence spans 508 residues: Glycerol kinase (508 aa).

ADP is bound at residue T14. Residues T14, T15, and S16 each contribute to the ATP site. A sn-glycerol 3-phosphate-binding site is contributed by T14. Position 18 (R18) interacts with ADP. Sn-glycerol 3-phosphate-binding residues include R84, E85, Y136, and D245. Glycerol is bound by residues R84, E85, Y136, D245, and Q246. T267 and G314 together coordinate ADP. ATP-binding residues include T267, G314, Q318, and G415. ADP is bound by residues G415 and N419.

This sequence belongs to the FGGY kinase family.

The catalysed reaction is glycerol + ATP = sn-glycerol 3-phosphate + ADP + H(+). Its pathway is polyol metabolism; glycerol degradation via glycerol kinase pathway; sn-glycerol 3-phosphate from glycerol: step 1/1. Its activity is regulated as follows. Inhibited by fructose 1,6-bisphosphate (FBP). Functionally, key enzyme in the regulation of glycerol uptake and metabolism. Catalyzes the phosphorylation of glycerol to yield sn-glycerol 3-phosphate. The sequence is that of Glycerol kinase from Bordetella parapertussis (strain 12822 / ATCC BAA-587 / NCTC 13253).